The primary structure comprises 316 residues: Malate dehydrogenase 2 (316 aa).

Residues 10–15 and Asp-34 each bind NAD(+); that span reads GGGQIG. Arg-83 and Arg-89 together coordinate substrate. NAD(+)-binding positions include Asn-96 and 119–121; that span reads ISN. Residues Asn-121 and Arg-152 each contribute to the substrate site. His-176 (proton acceptor) is an active-site residue.

It belongs to the LDH/MDH superfamily. MDH type 3 family.

The catalysed reaction is (S)-malate + NAD(+) = oxaloacetate + NADH + H(+). Functionally, catalyzes the reversible oxidation of malate to oxaloacetate. The chain is Malate dehydrogenase 2 from Anaeromyxobacter dehalogenans (strain 2CP-C).